Consider the following 151-residue polypeptide: 3-hydroxyacyl-[acyl-carrier-protein] dehydratase FabZ (151 aa).

The active site involves histidine 49.

Belongs to the thioester dehydratase family. FabZ subfamily.

Its subcellular location is the cytoplasm. The enzyme catalyses a (3R)-hydroxyacyl-[ACP] = a (2E)-enoyl-[ACP] + H2O. Its function is as follows. Involved in unsaturated fatty acids biosynthesis. Catalyzes the dehydration of short chain beta-hydroxyacyl-ACPs and long chain saturated and unsaturated beta-hydroxyacyl-ACPs. The sequence is that of 3-hydroxyacyl-[acyl-carrier-protein] dehydratase FabZ from Bordetella parapertussis (strain 12822 / ATCC BAA-587 / NCTC 13253).